The chain runs to 102 residues: Large ribosomal subunit protein bL21 (102 aa).

This sequence belongs to the bacterial ribosomal protein bL21 family. As to quaternary structure, part of the 50S ribosomal subunit. Contacts protein L20.

Functionally, this protein binds to 23S rRNA in the presence of protein L20. The sequence is that of Large ribosomal subunit protein bL21 from Shouchella clausii (strain KSM-K16) (Alkalihalobacillus clausii).